The sequence spans 392 residues: Protein PrgH (392 aa).

A helical membrane pass occupies residues 142–162 (IVAALAGFFILGIGTVGTLWI).

It is found in the cell membrane. Required for invasion of epithelial cells. The protein is Protein PrgH (prgH) of Salmonella typhimurium (strain LT2 / SGSC1412 / ATCC 700720).